The primary structure comprises 102 residues: Carboxysome shell protein CsoS1C (102 aa).

The region spanning Ala8 to Ala93 is the BMC domain.

The protein belongs to the bacterial microcompartments protein family. CsoS1 subfamily. As to quaternary structure, homohexamer with a small central pore.

The protein localises to the carboxysome. In terms of biological role, one of shell proteins of the carboxysome, a polyhedral inclusion where RuBisCO (ribulose bisphosphate carboxylase, ccbL-ccbS) is sequestered. Assembles into hexamers which make sheets that form the facets of the polyhedral carboxysome. The shell probably limits the diffusion of CO(2) into and out of the carboxysome. This is Carboxysome shell protein CsoS1C from Hydrogenovibrio crunogenus (strain DSM 25203 / XCL-2) (Thiomicrospira crunogena).